The primary structure comprises 158 residues: ATP synthase subunit b', chloroplastic (158 aa).

Residues 25–45 traverse the membrane as a helical segment; the sequence is ATLPLMALQFIILTTILNFIF.

This sequence belongs to the ATPase B chain family. As to quaternary structure, F-type ATPases have 2 components, F(1) - the catalytic core - and F(0) - the membrane proton channel. F(1) has five subunits: alpha(3), beta(3), gamma(1), delta(1), epsilon(1). F(0) has four main subunits: a(1), b(1), b'(1) and c(10-14). The alpha and beta chains form an alternating ring which encloses part of the gamma chain. F(1) is attached to F(0) by a central stalk formed by the gamma and epsilon chains, while a peripheral stalk is formed by the delta, b and b' chains.

The protein localises to the plastid. Its subcellular location is the chloroplast thylakoid membrane. F(1)F(0) ATP synthase produces ATP from ADP in the presence of a proton or sodium gradient. F-type ATPases consist of two structural domains, F(1) containing the extramembraneous catalytic core and F(0) containing the membrane proton channel, linked together by a central stalk and a peripheral stalk. During catalysis, ATP synthesis in the catalytic domain of F(1) is coupled via a rotary mechanism of the central stalk subunits to proton translocation. Its function is as follows. Component of the F(0) channel, it forms part of the peripheral stalk, linking F(1) to F(0). The b'-subunit is a diverged and duplicated form of b found in plants and photosynthetic bacteria. This Gracilaria tenuistipitata var. liui (Red alga) protein is ATP synthase subunit b', chloroplastic.